A 567-amino-acid chain; its full sequence is Adenine deaminase (567 aa).

The protein belongs to the metallo-dependent hydrolases superfamily. Adenine deaminase family. It depends on Mn(2+) as a cofactor.

It carries out the reaction adenine + H2O + H(+) = hypoxanthine + NH4(+). The polypeptide is Adenine deaminase (Methanothrix thermoacetophila (strain DSM 6194 / JCM 14653 / NBRC 101360 / PT) (Methanosaeta thermophila)).